Reading from the N-terminus, the 142-residue chain is Lysosomal enzyme trafficking factor (142 aa).

Transmembrane regions (helical) follow at residues 8-28 (MGWI…YYIF) and 76-96 (LLPF…VFLF).

The protein belongs to the LYSET family.

It localises to the golgi apparatus membrane. Its function is as follows. Required for mannose-6-phosphate-dependent trafficking of lysosomal enzymes. LYSET bridges GlcNAc-1-phosphate transferase (GNPTAB), to the membrane-bound transcription factor site-1 protease (MBTPS1), thus allowing proteolytic activation of the GNPTAB. GNPTAB is involved in the regulation of M6P-dependent Golgi-to-lysosome trafficking of lysosomal enzymes. LYSET is thus an essential factor for maturation and delivery of lysosomal hydrolases. This Danio rerio (Zebrafish) protein is Lysosomal enzyme trafficking factor (tmem251).